The chain runs to 270 residues: MGNTSSERAALERHGGHKTPRRDSSGGTKDGDRPKILMDSPEDADLFHSEEIKAPEKEEFLAWQRDLEVNDKAPAQARPTVFRWTGGGKEVYLSGSFNNWSKLPLTRSHNNFVAILDLPEGEHQYKFFVDGQWTHDPSEPIVTSQLGTVNNIIQVKKTDFEVFDALMVDSQKCSDVSELSSSPPGPYHQEPYVCKPEERFRAPPILPPHLLQVILNKDTGISCDPALLPEPNHVMLNHLYALSIKDGVMVLSATHRYKKKYVTTLLYKPI.

The tract at residues 1 to 46 is disordered; it reads MGNTSSERAALERHGGHKTPRRDSSGGTKDGDRPKILMDSPEDADL. Glycine 2 carries the N-myristoyl glycine lipid modification. Threonine 4 is subject to Phosphothreonine. Phosphoserine is present on residues serine 5 and serine 6. Threonine 19 carries the phosphothreonine modification. Positions 21-36 are enriched in basic and acidic residues; sequence RRDSSGGTKDGDRPKI. Phosphoserine; by autocatalysis occurs at positions 24 and 25. A phosphoserine mark is found at serine 40, serine 96, and serine 101. The glycogen-binding domain stretch occupies residues 68 to 163; it reads EVNDKAPAQA…QVKKTDFEVF (96 aa). Residue serine 108 is modified to Phosphoserine; by autocatalysis. A Phosphothreonine modification is found at threonine 148. Serine 182 carries the phosphoserine modification.

Belongs to the 5'-AMP-activated protein kinase beta subunit family. AMPK is a heterotrimer of an alpha catalytic subunit (PRKAA1 or PRKAA2), a beta (PRKAB1 or PRKAB2) and a gamma non-catalytic subunits (PRKAG1, PRKAG2 or PRKAG3). Interacts with FNIP1 and FNIP2. Post-translationally, phosphorylated when associated with the catalytic subunit (PRKAA1 or PRKAA2). Phosphorylated by ULK1; leading to negatively regulate AMPK activity and suggesting the existence of a regulatory feedback loop between ULK1 and AMPK.

In terms of biological role, non-catalytic subunit of AMP-activated protein kinase (AMPK), an energy sensor protein kinase that plays a key role in regulating cellular energy metabolism. In response to reduction of intracellular ATP levels, AMPK activates energy-producing pathways and inhibits energy-consuming processes: inhibits protein, carbohydrate and lipid biosynthesis, as well as cell growth and proliferation. AMPK acts via direct phosphorylation of metabolic enzymes, and by longer-term effects via phosphorylation of transcription regulators. Also acts as a regulator of cellular polarity by remodeling the actin cytoskeleton; probably by indirectly activating myosin. Beta non-catalytic subunit acts as a scaffold on which the AMPK complex assembles, via its C-terminus that bridges alpha (PRKAA1 or PRKAA2) and gamma subunits (PRKAG1, PRKAG2 or PRKAG3). In Pongo abelii (Sumatran orangutan), this protein is 5'-AMP-activated protein kinase subunit beta-1 (PRKAB1).